Reading from the N-terminus, the 179-residue chain is MPLVFFARVADVSLGTFRTIVIFRGHKFLASFIGFFEIIIWLVASAQVLTNLDQWYLALAYASGFSVGNYAGISIENRFAIGNELIRCISFNRDVLAGKLREEGFKVVSFDGDMGEAYPVELLLVIEKRRNVPSLIQLIKDLDPTAVYSVSDVKSVYEGPDIFPRRSLLHSTLMLLGKR.

2 helical membrane passes run 28 to 48 and 55 to 75; these read FLAS…SAQV and WYLA…GISI.

The protein belongs to the UPF0316 family.

The protein localises to the cell membrane. The chain is UPF0316 protein Ping_1367 from Psychromonas ingrahamii (strain DSM 17664 / CCUG 51855 / 37).